We begin with the raw amino-acid sequence, 1036 residues long: Exportin-T (1036 aa).

Belongs to the exportin family.

Its subcellular location is the nucleus. It is found in the cytoplasm. TRNA nucleus export receptor which facilitates tRNA translocation across the nuclear pore complex. Involved in pre-tRNA splicing, probably by affecting the interaction of pre-tRNA with splicing endonuclease. In Phaeosphaeria nodorum (strain SN15 / ATCC MYA-4574 / FGSC 10173) (Glume blotch fungus), this protein is Exportin-T (LOS1).